The primary structure comprises 403 residues: Stearoyl-[acyl-carrier-protein] 9-desaturase 4, chloroplastic (403 aa).

A chloroplast-targeting transit peptide spans 1-44 (MALLLNSTMTVAMKQNPATAVSFMQTTCLGSSFSPPRHLQVSCV). The Fe cation site is built by Glu140, Glu178, His181, Glu231, Glu264, and His267.

Belongs to the fatty acid desaturase type 2 family. As to quaternary structure, homodimer. The cofactor is Fe(2+). As to expression, preferentially expressed in roots.

The protein localises to the plastid. It localises to the chloroplast. The catalysed reaction is octadecanoyl-[ACP] + 2 reduced [2Fe-2S]-[ferredoxin] + O2 + 2 H(+) = (9Z)-octadecenoyl-[ACP] + 2 oxidized [2Fe-2S]-[ferredoxin] + 2 H2O. The protein operates within lipid metabolism; fatty acid metabolism. Converts stearoyl-ACP to oleoyl-ACP by introduction of a cis double bond between carbons 9 and 10 of the acyl chain. This Arabidopsis thaliana (Mouse-ear cress) protein is Stearoyl-[acyl-carrier-protein] 9-desaturase 4, chloroplastic (S-ACP-DES4).